A 744-amino-acid chain; its full sequence is Scytalone dehydratase-like protein Arp1 (744 aa).

Tyr621 provides a ligand contact to substrate. Active-site residues include His656 and His681. Asn702 is a substrate binding site.

It belongs to the scytalone dehydratase family. As to quaternary structure, homotrimer. Each subunit contains an active site, located in the central part of the hydrophobic core of the monomer, which functions independently.

Functionally, scytalone dehydratase-like protein; part of the Pks2 gene cluster that mediates the formation of infectious structures (appressoria), enabling these fungi to kill insects faster. The product of the Pks2 gene cluster is different from the one of Pks1 and has still not been identified. The protein is Scytalone dehydratase-like protein Arp1 of Metarhizium brunneum (strain ARSEF 3297).